A 141-amino-acid chain; its full sequence is Sec-independent protein translocase protein TatB (141 aa).

Residues 2–22 form a helical membrane-spanning segment; it reads FANVGWGEMLVLVIAGLVILG. The tract at residues 92-141 is disordered; sequence IFTGRFDSTSSDQPGSGKPPKPQSGPGPAAASGPAATTTPASTPFDPDAT. The segment covering 117–141 has biased composition (low complexity); it reads PGPAAASGPAATTTPASTPFDPDAT.

This sequence belongs to the TatB family. The Tat system comprises two distinct complexes: a TatABC complex, containing multiple copies of TatA, TatB and TatC subunits, and a separate TatA complex, containing only TatA subunits. Substrates initially bind to the TatABC complex, which probably triggers association of the separate TatA complex to form the active translocon.

The protein resides in the cell membrane. Functionally, part of the twin-arginine translocation (Tat) system that transports large folded proteins containing a characteristic twin-arginine motif in their signal peptide across membranes. Together with TatC, TatB is part of a receptor directly interacting with Tat signal peptides. TatB may form an oligomeric binding site that transiently accommodates folded Tat precursor proteins before their translocation. The sequence is that of Sec-independent protein translocase protein TatB from Mycolicibacterium gilvum (strain PYR-GCK) (Mycobacterium gilvum (strain PYR-GCK)).